A 305-amino-acid chain; its full sequence is Taste receptor type 2 member 13 (305 aa).

At 1–7 the chain is on the extracellular side; sequence MGSSLYD. Residues 8-28 traverse the membrane as a helical segment; it reads ILTIVMIAEFIFGNVTNGFIV. Over 29 to 42 the chain is Cytoplasmic; the sequence is LTNCIAWLSKRTLS. Residues 43 to 63 form a helical membrane-spanning segment; it reads FIGWIQLFLAISRVVLIWEML. The Extracellular segment spans residues 64 to 88; that stretch reads LAWLKYMKYSFSYLAGTELRVMMLT. A helical transmembrane segment spans residues 89–109; the sequence is WVVSNHFSLWLATILSIFYLL. Topologically, residues 110–128 are cytoplasmic; sequence KIASFSRPVFLYLKWRVKK. Residues 129–149 form a helical membrane-spanning segment; the sequence is VLLLILLGNLIFLMFNILQIN. Over 150 to 182 the chain is Extracellular; sequence THIEDWMDQYKRNITWDSRVNEFVGFSNLVLLE. A glycan (N-linked (GlcNAc...) asparagine) is linked at Asn162. The chain crosses the membrane as a helical span at residues 183 to 203; sequence MIMFSVTPFTVALVSFILLIF. The Cytoplasmic segment spans residues 204-232; it reads SLWKHLQKMHLSSRGERDPSTKAHVNALR. A helical membrane pass occupies residues 233 to 253; the sequence is IMVSFLLLYATYFISFFISLI. Residues 254–262 are Extracellular-facing; the sequence is PMAHKKGLD. The helical transmembrane segment at 263-283 threads the bilayer; it reads LMFSLTVGLFYPSSHSFILIL. The Cytoplasmic segment spans residues 284–305; sequence GHSNLRHSSCLVITYLRCKEKD.

The protein belongs to the G-protein coupled receptor T2R family. As to expression, expressed in subsets of taste receptor cells of the tongue and palate epithelium and exclusively in gustducin-positive cells. Expressed in 15% taste bud cells in circumvallate and foliate papillae but only in 2% in fungiform papillae. Expressed in the duodenum, antrum and fundus (part of the stomach).

The protein resides in the membrane. Its function is as follows. Receptor that may play a role in the perception of bitterness and is gustducin-linked. May play a role in sensing the chemical composition of the gastrointestinal content. The activity of this receptor may stimulate alpha gustducin, mediate PLC-beta-2 activation and lead to the gating of TRPM5. The polypeptide is Taste receptor type 2 member 13 (Tas2r13) (Rattus norvegicus (Rat)).